Consider the following 199-residue polypeptide: dITP/XTP pyrophosphatase (199 aa).

Residue 12-17 (SGNAGK) participates in substrate binding. D73 serves as the catalytic Proton acceptor. D73 contacts Mg(2+). Substrate-binding positions include S74, 157–160 (FGYD), K180, and 185–186 (HR).

This sequence belongs to the HAM1 NTPase family. Homodimer. It depends on Mg(2+) as a cofactor.

The catalysed reaction is XTP + H2O = XMP + diphosphate + H(+). The enzyme catalyses dITP + H2O = dIMP + diphosphate + H(+). It carries out the reaction ITP + H2O = IMP + diphosphate + H(+). In terms of biological role, pyrophosphatase that catalyzes the hydrolysis of nucleoside triphosphates to their monophosphate derivatives, with a high preference for the non-canonical purine nucleotides XTP (xanthosine triphosphate), dITP (deoxyinosine triphosphate) and ITP. Seems to function as a house-cleaning enzyme that removes non-canonical purine nucleotides from the nucleotide pool, thus preventing their incorporation into DNA/RNA and avoiding chromosomal lesions. The chain is dITP/XTP pyrophosphatase from Neisseria meningitidis serogroup A / serotype 4A (strain DSM 15465 / Z2491).